The sequence spans 280 residues: MDLYNNKNSDTSKIKRDASVNDRIPDGLFLACPYCGAQMYNKQLGKYRVCAKCNYGFRLQAWERVELLTKNFEEMDSDIQMDHPEFPGYAEKLKRAQSQTELAESVLTGTADIEGEQVALGIMDSYFMMGSLGSMTGEKITRLFEYATAHTLPVVLFTASGGARMQEGIDSLMQMAKVSAAVAAHQEAKLLYLVVLTDPTTGGVTASFAMQGDVTLAEPHALVGFAGARVIESTIHEKLPKDFQRVETLLENGFVDQIVPRSELAQLIAKIVRLHTAEAE.

A CoA carboxyltransferase N-terminal domain is found at 28-280; it reads LFLACPYCGA…IVRLHTAEAE (253 aa). Zn(2+) is bound by residues Cys32, Cys35, Cys50, and Cys53. The C4-type zinc finger occupies 32-53; that stretch reads CPYCGAQMYNKQLGKYRVCAKC.

The protein belongs to the AccD/PCCB family. As to quaternary structure, acetyl-CoA carboxylase is a heterohexamer composed of biotin carboxyl carrier protein (AccB), biotin carboxylase (AccC) and two subunits each of ACCase subunit alpha (AccA) and ACCase subunit beta (AccD). It depends on Zn(2+) as a cofactor.

It is found in the cytoplasm. The catalysed reaction is N(6)-carboxybiotinyl-L-lysyl-[protein] + acetyl-CoA = N(6)-biotinyl-L-lysyl-[protein] + malonyl-CoA. It functions in the pathway lipid metabolism; malonyl-CoA biosynthesis; malonyl-CoA from acetyl-CoA: step 1/1. In terms of biological role, component of the acetyl coenzyme A carboxylase (ACC) complex. Biotin carboxylase (BC) catalyzes the carboxylation of biotin on its carrier protein (BCCP) and then the CO(2) group is transferred by the transcarboxylase to acetyl-CoA to form malonyl-CoA. This is Acetyl-coenzyme A carboxylase carboxyl transferase subunit beta from Leuconostoc mesenteroides subsp. mesenteroides (strain ATCC 8293 / DSM 20343 / BCRC 11652 / CCM 1803 / JCM 6124 / NCDO 523 / NBRC 100496 / NCIMB 8023 / NCTC 12954 / NRRL B-1118 / 37Y).